Consider the following 318-residue polypeptide: Ribosomal protein L11 methyltransferase (318 aa).

Positions 161, 182, 204, and 247 each coordinate S-adenosyl-L-methionine.

Belongs to the methyltransferase superfamily. PrmA family.

The protein localises to the cytoplasm. It carries out the reaction L-lysyl-[protein] + 3 S-adenosyl-L-methionine = N(6),N(6),N(6)-trimethyl-L-lysyl-[protein] + 3 S-adenosyl-L-homocysteine + 3 H(+). Methylates ribosomal protein L11. The chain is Ribosomal protein L11 methyltransferase from Moorella thermoacetica (strain ATCC 39073 / JCM 9320).